A 295-amino-acid chain; its full sequence is Acetaldehyde dehydrogenase (295 aa).

11–14 serves as a coordination point for NAD(+); sequence SGNI. Cysteine 127 serves as the catalytic Acyl-thioester intermediate. NAD(+) is bound by residues 158–166 and asparagine 269; that span reads SAGPGTRSN.

This sequence belongs to the acetaldehyde dehydrogenase family.

The catalysed reaction is acetaldehyde + NAD(+) + CoA = acetyl-CoA + NADH + H(+). This chain is Acetaldehyde dehydrogenase, found in Brevibacillus brevis (strain 47 / JCM 6285 / NBRC 100599).